Consider the following 227-residue polypeptide: Cytochrome c oxidase subunit 2 (227 aa).

At methionine 1 to serine 14 the chain is on the mitochondrial intermembrane side. Residues proline 15 to methionine 45 traverse the membrane as a helical segment. Residues leucine 46–glutamine 59 lie on the Mitochondrial matrix side of the membrane. Residues glutamate 60 to methionine 87 form a helical membrane-spanning segment. Over aspartate 88–isoleucine 227 the chain is Mitochondrial intermembrane. Cu cation contacts are provided by histidine 161, cysteine 196, glutamate 198, cysteine 200, histidine 204, and methionine 207. A Mg(2+)-binding site is contributed by glutamate 198. Residue tyrosine 218 is modified to Phosphotyrosine.

It belongs to the cytochrome c oxidase subunit 2 family. Component of the cytochrome c oxidase (complex IV, CIV), a multisubunit enzyme composed of 14 subunits. The complex is composed of a catalytic core of 3 subunits MT-CO1, MT-CO2 and MT-CO3, encoded in the mitochondrial DNA, and 11 supernumerary subunits COX4I, COX5A, COX5B, COX6A, COX6B, COX6C, COX7A, COX7B, COX7C, COX8 and NDUFA4, which are encoded in the nuclear genome. The complex exists as a monomer or a dimer and forms supercomplexes (SCs) in the inner mitochondrial membrane with NADH-ubiquinone oxidoreductase (complex I, CI) and ubiquinol-cytochrome c oxidoreductase (cytochrome b-c1 complex, complex III, CIII), resulting in different assemblies (supercomplex SCI(1)III(2)IV(1) and megacomplex MCI(2)III(2)IV(2)). Found in a complex with TMEM177, COA6, COX18, COX20, SCO1 and SCO2. Interacts with TMEM177 in a COX20-dependent manner. Interacts with COX20. Interacts with COX16. Cu cation is required as a cofactor.

The protein localises to the mitochondrion inner membrane. The enzyme catalyses 4 Fe(II)-[cytochrome c] + O2 + 8 H(+)(in) = 4 Fe(III)-[cytochrome c] + 2 H2O + 4 H(+)(out). Component of the cytochrome c oxidase, the last enzyme in the mitochondrial electron transport chain which drives oxidative phosphorylation. The respiratory chain contains 3 multisubunit complexes succinate dehydrogenase (complex II, CII), ubiquinol-cytochrome c oxidoreductase (cytochrome b-c1 complex, complex III, CIII) and cytochrome c oxidase (complex IV, CIV), that cooperate to transfer electrons derived from NADH and succinate to molecular oxygen, creating an electrochemical gradient over the inner membrane that drives transmembrane transport and the ATP synthase. Cytochrome c oxidase is the component of the respiratory chain that catalyzes the reduction of oxygen to water. Electrons originating from reduced cytochrome c in the intermembrane space (IMS) are transferred via the dinuclear copper A center (CU(A)) of subunit 2 and heme A of subunit 1 to the active site in subunit 1, a binuclear center (BNC) formed by heme A3 and copper B (CU(B)). The BNC reduces molecular oxygen to 2 water molecules using 4 electrons from cytochrome c in the IMS and 4 protons from the mitochondrial matrix. The polypeptide is Cytochrome c oxidase subunit 2 (MT-CO2) (Hybomys univittatus (Peter's striped mouse)).